The primary structure comprises 244 residues: Protein crossbronx (244 aa).

A UBC core domain is found at 20-176 (QQEYKILAEY…VLENIKESKE (157 aa)).

This sequence belongs to the ubiquitin-conjugating enzyme family. FTS subfamily.

The protein is Protein crossbronx (cbx) of Drosophila persimilis (Fruit fly).